An 887-amino-acid chain; its full sequence is Bifunctional uridylyltransferase/uridylyl-removing enzyme (887 aa).

Residues methionine 1–glutamate 337 form a uridylyltransferase region. Positions valine 339 to valine 699 are uridylyl-removing. The region spanning valine 457 to leucine 579 is the HD domain. ACT domains follow at residues glutamine 700–arginine 782 and methionine 809–histidine 887.

It belongs to the GlnD family. Mg(2+) is required as a cofactor.

It carries out the reaction [protein-PII]-L-tyrosine + UTP = [protein-PII]-uridylyl-L-tyrosine + diphosphate. The catalysed reaction is [protein-PII]-uridylyl-L-tyrosine + H2O = [protein-PII]-L-tyrosine + UMP + H(+). With respect to regulation, uridylyltransferase (UTase) activity is inhibited by glutamine, while glutamine activates uridylyl-removing (UR) activity. Modifies, by uridylylation and deuridylylation, the PII regulatory proteins (GlnB and homologs), in response to the nitrogen status of the cell that GlnD senses through the glutamine level. Under low glutamine levels, catalyzes the conversion of the PII proteins and UTP to PII-UMP and PPi, while under higher glutamine levels, GlnD hydrolyzes PII-UMP to PII and UMP (deuridylylation). Thus, controls uridylylation state and activity of the PII proteins, and plays an important role in the regulation of nitrogen assimilation and metabolism. The protein is Bifunctional uridylyltransferase/uridylyl-removing enzyme of Acinetobacter baumannii (strain ACICU).